The primary structure comprises 49 residues: Large ribosomal subunit protein eL40 (49 aa).

Belongs to the eukaryotic ribosomal protein eL40 family.

The sequence is that of Large ribosomal subunit protein eL40 from Methanopyrus kandleri (strain AV19 / DSM 6324 / JCM 9639 / NBRC 100938).